Consider the following 209-residue polypeptide: Flavin prenyltransferase UbiX (209 aa).

FMN is bound by residues 13–15 (GAS), Ser-39, 104–107 (STGT), Cys-116, and Arg-139. Dimethylallyl phosphate contacts are provided by Tyr-169 and Arg-185.

Belongs to the UbiX/PAD1 family.

It catalyses the reaction dimethylallyl phosphate + FMNH2 = prenylated FMNH2 + phosphate. In terms of biological role, flavin prenyltransferase that catalyzes the synthesis of the prenylated FMN cofactor (prenyl-FMN) for 4-hydroxy-3-polyprenylbenzoic acid decarboxylase UbiD. The prenyltransferase is metal-independent and links a dimethylallyl moiety from dimethylallyl monophosphate (DMAP) to the flavin N5 and C6 atoms of FMN. The sequence is that of Flavin prenyltransferase UbiX from Pseudomonas aeruginosa (strain ATCC 15692 / DSM 22644 / CIP 104116 / JCM 14847 / LMG 12228 / 1C / PRS 101 / PAO1).